The sequence spans 240 residues: 45 kDa antigen (240 aa).

2 Fibronectin type-III domains span residues 1 to 109 (EFPD…FHTL) and 110 to 210 (ANGT…KSGH).

The chain is 45 kDa antigen from Taenia ovis (Sheep tapeworm).